The sequence spans 802 residues: MNFNNNNNNNNNNNNNNNLNNNNNNVNNINNNNKKPLTNSLAGTPPAKKILVIKNLKQIPKTPDNYEDSSWNKLSSAITSINMKQATTLTQEELYKMVENLCFDKILASNLYNKISVQIEKHITLTIKHLVLTMSSDPIIFLKSINSIWKDHTNQMIMIRSIFLYLDRTYVIQNSNTVKSIWDLGLFYFGNNLSQQSNLERKTIDSLLYSIRCEREGDEIDRDLIHSLVKMLSSLNIYTKFEIEFIKETNRFYDMEGNSKINEIETPMYLKYVCERLNQEGERLMRYLEQSTKKQLMAVLDRQLIERHVDVILEKGFNAMVNGDRLEDLGKLYQLLNSVGEIKKIKESWQSYIKQTGIQMLNDKEKEATLIQDLLDYKDRLDRILSQSFSKNELLTYALKESFEYFINTKQNKPAELVARFIDSKLKVGGKRMSEEELETVLNKSLILFRYIQGKDVFEAFYKQDLSKRLLLDKSTSIDAEKSMISKLKTECGTTFTAKLEEMFKDIELSNDIMNSFRDSPMTQNFKSIEMNIYVLTSGNWPIQPPIEATLPKEFLEYQEVFNKFYLSKHNGKTLKWQNALSYCVLKANFIQGKKELSVSLFQTIILYLFNDVIDGGELSFRDIQANTGLAIPELKKNLLSLCSSKSDILIQKKSSTSSNTSSNTSSNTSSSASGSASGGASGGATKTKVIDETDTFLFNSKFSSKLFKIKVNSIQIQETVEENQKTNENIISDRQYQVDAAIVRIMKTRKTLAHNLLISELVSLLKFQPKPVDLKKRIEILIEKEYLCRDPENAMIYNYMA.

2 stretches are compositionally biased toward low complexity: residues M1–N33 and S656–S676. Disordered regions lie at residues M1 to G43 and S656 to T686. The Cullin neddylation domain occupies D734–N794. K748 is covalently cross-linked (Glycyl lysine isopeptide (Lys-Gly) (interchain with G-Cter in NEDD8)).

This sequence belongs to the cullin family. Neddylated. Deneddylated via its interaction with the COP9 signalosome (CSN) complex.

The protein operates within protein modification; protein ubiquitination. Probable core component of cullin-based SCF-like E3 ubiquitin-protein ligase complexes which mediate the ubiquitination and subsequent proteasomal degradation of target proteins. The E3 ubiquitin-protein ligase activity of the complex is dependent on the neddylation of the cullin subunit. In Dictyostelium discoideum (Social amoeba), this protein is Cullin-4 (culD).